The following is a 554-amino-acid chain: Calcium-dependent protein kinase 3 (554 aa).

Positions 30-55 (KKKSSNKSIKSQHKFEGSKIANKNNE) are disordered. The Protein kinase domain occupies 110–365 (NLSEEPLGKG…ASEALKHPWF (256 aa)). ATP is bound by residues 116 to 124 (LGKGTYGCV) and lysine 139. The active-site Proton acceptor is aspartate 230. The J domain autoinhibitory motif signature appears at 385-393 (NFKNYALLL). A j domain region spans residues 385-420 (NFKNYALLLKLQKLAMTIIAQQSNDYDLQQLKTVFL). A J domain EF-hand interaction motif motif is present at residues 394 to 403 (KLQKLAMTII). EF-hand domains lie at 410 to 445 (YDLQQLKTVFLYLDEDGKGNITKNQLKKGLENSGLK), 448 to 479 (QNFDVLLDQIDSDGSGRIDYTEFLAAALDRKH), 480 to 515 (LSKKLIYCAFRVFDVDNDGEITTAELAHILYNGNKK), and 521 to 554 (KDVNQVKKMIQEVDKNNDGKIDFYEFCEMMKLKY). Residues aspartate 458, aspartate 460, serine 462, arginine 464, glutamate 469, aspartate 493, aspartate 495, aspartate 497, glutamate 499, glutamate 504, aspartate 534, asparagine 536, aspartate 538, lysine 540, and glutamate 545 each contribute to the Ca(2+) site.

It belongs to the protein kinase superfamily. Ser/Thr protein kinase family. CDPK subfamily. Mg(2+) serves as cofactor.

Its subcellular location is the cytoplasm. It catalyses the reaction L-seryl-[protein] + ATP = O-phospho-L-seryl-[protein] + ADP + H(+). The enzyme catalyses L-threonyl-[protein] + ATP = O-phospho-L-threonyl-[protein] + ADP + H(+). With respect to regulation, activated by calcium. Upon calcium binding to the EF-hand domain 2, the C-terminus of the junction domain (J domain) undergoes a conformational change which results in the dissociation of the pseudo-substrate inhibitory motif from the catalytic domain. This, in turn, may facilitate the autophosphorylation of the activation loop at Thr-271, which leads to the kinase activation. Functionally, calcium-dependent protein kinase which acts as a sensor and effector of intracellular Ca(2+) levels probably in part downstream of cGMP-activated PKG kinase. In the mosquito midgut, regulates the gliding motility of the ookinete which is essential for the ookinete to invade the midgut epithelium. However, another study showed that while required for ookinete invasion of the midgut epithelium, is not required for ookinete gliding motility. This Plasmodium berghei (strain Anka) protein is Calcium-dependent protein kinase 3.